A 374-amino-acid chain; its full sequence is N5-carboxyaminoimidazole ribonucleotide synthase (374 aa).

Residues Arg-108, Lys-148, 153–159, 183–186, Glu-191, His-214, and 266–267 each bind ATP; these read GYDGKGQ, EKYL, and NE. One can recognise an ATP-grasp domain in the interval 112-296; it reads KETLKSAGTK…QFDTHILAVT (185 aa).

Belongs to the PurK/PurT family. In terms of assembly, homodimer.

The enzyme catalyses 5-amino-1-(5-phospho-beta-D-ribosyl)imidazole + hydrogencarbonate + ATP = 5-carboxyamino-1-(5-phospho-D-ribosyl)imidazole + ADP + phosphate + 2 H(+). The protein operates within purine metabolism; IMP biosynthesis via de novo pathway; 5-amino-1-(5-phospho-D-ribosyl)imidazole-4-carboxylate from 5-amino-1-(5-phospho-D-ribosyl)imidazole (N5-CAIR route): step 1/2. Catalyzes the ATP-dependent conversion of 5-aminoimidazole ribonucleotide (AIR) and HCO(3)(-) to N5-carboxyaminoimidazole ribonucleotide (N5-CAIR). The protein is N5-carboxyaminoimidazole ribonucleotide synthase of Staphylococcus aureus (strain Mu50 / ATCC 700699).